Reading from the N-terminus, the 574-residue chain is Streptolysin O (574 aa).

The N-terminal stretch at 1–36 (MKDMSNKKIFKKYSRVAGLLTAALIVGNLVTANADS) is a signal peptide. Low complexity predominate over residues 37–52 (NKQNTANTETTTTNEQ). Disordered stretches follow at residues 37-64 (NKQN…TTEK) and 84-111 (KEMP…HTEE). Residues 53-64 (PKPESSELTTEK) show a composition bias toward basic and acidic residues. 4 consecutive transmembrane segments (beta stranded) span residues 263–276 (KSQI…NSKI), 283–292 (IDFKSISKGE), 361–370 (SNDVEAAFSA), and 378–390 (KTNG…LENS). The Conserved undecapeptide signature appears at 532–542 (ECTGLAWEWWR). The Cholesterol binding signature appears at 564-565 (TL).

The protein belongs to the cholesterol-dependent cytolysin family. Homooligomeric pore complex of 35 to 50 subunits; when inserted in the host membrane.

It is found in the secreted. The protein localises to the host cell membrane. Functionally, a cholesterol-dependent toxin that causes cytolysis by forming pores in cholesterol containing host membranes. After binding to target membranes, the protein undergoes a major conformation change, leading to its insertion in the host membrane and formation of an oligomeric pore complex. Cholesterol is required for binding to host membranes, membrane insertion and pore formation; cholesterol binding is mediated by a Thr-Leu pair in the C-terminus. Can be reversibly inactivated by oxidation. The protein is Streptolysin O (slo) of Streptococcus canis.